The primary structure comprises 520 residues: GMP synthase [glutamine-hydrolyzing] (520 aa).

Positions lysine 13–aspartate 205 constitute a Glutamine amidotransferase type-1 domain. The active-site Nucleophile is cysteine 90. Catalysis depends on residues histidine 179 and glutamate 181. The GMPS ATP-PPase domain occupies tryptophan 206 to arginine 395. Serine 233–serine 239 is an ATP binding site.

As to quaternary structure, homodimer.

The enzyme catalyses XMP + L-glutamine + ATP + H2O = GMP + L-glutamate + AMP + diphosphate + 2 H(+). It participates in purine metabolism; GMP biosynthesis; GMP from XMP (L-Gln route): step 1/1. Functionally, catalyzes the synthesis of GMP from XMP. This is GMP synthase [glutamine-hydrolyzing] from Streptococcus pneumoniae (strain P1031).